We begin with the raw amino-acid sequence, 552 residues long: Non-structural protein NS1 (552 aa).

This sequence belongs to the orbivirus non-structural protein NS1 family.

The polypeptide is Non-structural protein NS1 (Segment-5) (Bluetongue virus 13 (isolate USA) (BTV 13)).